We begin with the raw amino-acid sequence, 358 residues long: Peptide chain release factor 1 (358 aa).

Q233 bears the N5-methylglutamine mark.

It belongs to the prokaryotic/mitochondrial release factor family. In terms of processing, methylated by PrmC. Methylation increases the termination efficiency of RF1.

It is found in the cytoplasm. Its function is as follows. Peptide chain release factor 1 directs the termination of translation in response to the peptide chain termination codons UAG and UAA. This is Peptide chain release factor 1 from Clostridium botulinum (strain 657 / Type Ba4).